The primary structure comprises 548 residues: Membrane protein insertase YidC (548 aa).

The helical transmembrane segment at 6 to 26 threads the bilayer; sequence NLLIIALLFVSFMIWQAWEQD. Residues 28-52 are disordered; that stretch reads NPQPQQQTTQTTTTAAGSAADQGVP. The segment covering 29–41 has biased composition (low complexity); that stretch reads PQPQQQTTQTTTT. 4 helical membrane-spanning segments follow: residues 345 to 365, 420 to 440, 458 to 478, and 499 to 519; these read KFIH…TFIV, LGGC…YYML, LSAQ…MFFI, and PVIF…YYIV.

The protein belongs to the OXA1/ALB3/YidC family. Type 1 subfamily. As to quaternary structure, interacts with the Sec translocase complex via SecD. Specifically interacts with transmembrane segments of nascent integral membrane proteins during membrane integration.

It is found in the cell inner membrane. Required for the insertion and/or proper folding and/or complex formation of integral membrane proteins into the membrane. Involved in integration of membrane proteins that insert both dependently and independently of the Sec translocase complex, as well as at least some lipoproteins. Aids folding of multispanning membrane proteins. The chain is Membrane protein insertase YidC from Klebsiella pneumoniae subsp. pneumoniae (strain ATCC 700721 / MGH 78578).